The sequence spans 133 residues: NLP effector protein 14 (133 aa).

The Conserved undecapeptide motifI I motif lies at 1–9 (MYSWYFPKD). A Hepta-peptide GHRHDWE motif II motif is present at residues 16–22 (GHRHDWE).

This sequence belongs to the Necrosis inducing protein (NPP1) family.

The protein localises to the secreted. Its function is as follows. Secreted effector that contributes strongly to virulence during infection by P.capsici. Causes large necrotic areas in both host C.annuum and non-host N.benthamiana. The chain is NLP effector protein 14 from Phytophthora capsici.